The primary structure comprises 159 residues: LOB domain-containing protein 25 (159 aa).

The region spanning serine 38–leucine 139 is the LOB domain.

The protein belongs to the LOB domain-containing protein family. As to expression, expressed in young shoots, roots, stems, leaves and flowers.

This chain is LOB domain-containing protein 25 (LBD25), found in Arabidopsis thaliana (Mouse-ear cress).